Reading from the N-terminus, the 538-residue chain is Chaperonin GroEL (538 aa).

Residues T29–P32, D86–T90, G413, D479–L481, and D495 contribute to the ATP site.

It belongs to the chaperonin (HSP60) family. As to quaternary structure, forms a cylinder of 14 subunits composed of two heptameric rings stacked back-to-back. Interacts with the co-chaperonin GroES.

It is found in the cytoplasm. The enzyme catalyses ATP + H2O + a folded polypeptide = ADP + phosphate + an unfolded polypeptide.. Its function is as follows. Together with its co-chaperonin GroES, plays an essential role in assisting protein folding. The GroEL-GroES system forms a nano-cage that allows encapsulation of the non-native substrate proteins and provides a physical environment optimized to promote and accelerate protein folding. The chain is Chaperonin GroEL from Thermotoga neapolitana.